Consider the following 115-residue polypeptide: NADH-ubiquinone oxidoreductase chain 3 (115 aa).

The next 3 membrane-spanning stretches (helical) occupy residues 3-23, 55-75, and 84-104; these read LMLALLTNFTLATLLVIIAFW, FFLVAITFLLFDLEIALLLPL, and LNTMLTMALFLIILLAVSLAY.

It belongs to the complex I subunit 3 family. In terms of assembly, core subunit of respiratory chain NADH dehydrogenase (Complex I) which is composed of 45 different subunits. Interacts with TMEM186. Interacts with TMEM242.

It localises to the mitochondrion inner membrane. It catalyses the reaction a ubiquinone + NADH + 5 H(+)(in) = a ubiquinol + NAD(+) + 4 H(+)(out). Its function is as follows. Core subunit of the mitochondrial membrane respiratory chain NADH dehydrogenase (Complex I) which catalyzes electron transfer from NADH through the respiratory chain, using ubiquinone as an electron acceptor. Essential for the catalytic activity of complex I. The protein is NADH-ubiquinone oxidoreductase chain 3 of Bos indicus (Zebu).